The primary structure comprises 250 residues: 5-oxoprolinase subunit A (250 aa).

Belongs to the LamB/PxpA family. In terms of assembly, forms a complex composed of PxpA, PxpB and PxpC.

It catalyses the reaction 5-oxo-L-proline + ATP + 2 H2O = L-glutamate + ADP + phosphate + H(+). Catalyzes the cleavage of 5-oxoproline to form L-glutamate coupled to the hydrolysis of ATP to ADP and inorganic phosphate. The protein is 5-oxoprolinase subunit A of Pseudomonas fluorescens (strain Pf0-1).